The sequence spans 265 residues: 3-methyl-2-oxobutanoate hydroxymethyltransferase (265 aa).

2 residues coordinate Mg(2+): Asp-45 and Asp-84. 3-methyl-2-oxobutanoate contacts are provided by residues 45 to 46, Asp-84, and Lys-112; that span reads DS. Glu-114 contacts Mg(2+). Glu-182 acts as the Proton acceptor in catalysis.

Belongs to the PanB family. In terms of assembly, homodecamer; pentamer of dimers. Mg(2+) serves as cofactor.

It localises to the cytoplasm. The catalysed reaction is 3-methyl-2-oxobutanoate + (6R)-5,10-methylene-5,6,7,8-tetrahydrofolate + H2O = 2-dehydropantoate + (6S)-5,6,7,8-tetrahydrofolate. It functions in the pathway cofactor biosynthesis; (R)-pantothenate biosynthesis; (R)-pantoate from 3-methyl-2-oxobutanoate: step 1/2. Its function is as follows. Catalyzes the reversible reaction in which hydroxymethyl group from 5,10-methylenetetrahydrofolate is transferred onto alpha-ketoisovalerate to form ketopantoate. This is 3-methyl-2-oxobutanoate hydroxymethyltransferase from Baumannia cicadellinicola subsp. Homalodisca coagulata.